The chain runs to 159 residues: Transcription repressor OFP6 (159 aa).

The disordered stretch occupies residues 39 to 60 (PKRPSSTYRHCHSSISSATPSS). Residues 51–60 (SSISSATPSS) show a composition bias toward low complexity. An OVATE domain is found at 70-129 (VEKDSDDPYLDFRQSMLQMILENQIYSKDELRELLQCFLSLNSHYHHGIIVRAFSEIWED).

Interacts with KNAT1 and KNAT7. In terms of tissue distribution, expressed in roots, shoots, rosette and cauline leaves, stems, flower buds and siliques.

The protein localises to the nucleus. Its function is as follows. Transcriptional repressor that regulates multiple aspects of plant growth and development through the regulation of BEL1-LIKE (BLH) and KNOX TALE (KNAT) homeodomain transcription factors. In Arabidopsis thaliana (Mouse-ear cress), this protein is Transcription repressor OFP6 (OFP6).